A 164-amino-acid chain; its full sequence is Choriogonadotropin subunit beta (164 aa).

The first 20 residues, 1-20 (MEMLQGLLLCLLLSTGGAWA), serve as a signal peptide directing secretion. Intrachain disulfides connect C29-C77, C43-C92, C46-C130, C54-C108, C58-C110, and C113-C120. N50 carries an N-linked (GlcNAc...) asparagine glycan. The interval 133–164 (HTSQDSSSKDPPRNLTSPSQLPEPADAPLVPQ) is disordered. An O-linked (GalNAc...) serine glycan is attached at S140. N146 is a glycosylation site (N-linked (GlcNAc...) asparagine). S151 carries O-linked (GalNAc...) serine glycosylation.

It belongs to the glycoprotein hormones subunit beta family. Heterodimer of a common alpha chain and a unique beta chain which confers biological specificity to thyrotropin, lutropin, follitropin and gonadotropin.

It is found in the secreted. In terms of biological role, stimulates the ovaries to synthesize the steroids that are essential for the maintenance of pregnancy. The protein is Choriogonadotropin subunit beta (CGB) of Aotus nancymaae (Ma's night monkey).